Here is a 333-residue protein sequence, read N- to C-terminus: Taste receptor type 2 member 38 (333 aa).

Over 1–17 (MLTLTRIHTVSYEVRST) the chain is Extracellular. A helical membrane pass occupies residues 18 to 38 (FLFISVLEFAVGFLTNAFVFL). Residues 39-55 (VNFWDVVKRQPLSNSDC) are Cytoplasmic-facing. The chain crosses the membrane as a helical span at residues 56 to 76 (VLLCLSISRLFLHGLLFLSAI). The Extracellular portion of the chain corresponds to 77–94 (QLTHFQKLSEPLNHSYQA). The chain crosses the membrane as a helical span at residues 95 to 115 (INMLWMIANQANLWLAACLSL). The Cytoplasmic portion of the chain corresponds to 116–142 (LYCSKLIRFSHTFLICLASWVSRKISQ). The chain crosses the membrane as a helical span at residues 143–163 (MLLGIILCSCICTVLCVWCFF). At 164 to 190 (SRPHFTVTTVLFMNNNTRLNWQIKDLN) the chain is on the extracellular side. Asn-178 is a glycosylation site (N-linked (GlcNAc...) asparagine). Residues 191–211 (LFYSFLFCYLWSVPPFLLFLV) traverse the membrane as a helical segment. Over 212–251 (SSGMLTVSLGRHMRTMKVYTRDSRDPSLEAHIKALKSLVS) the chain is Cytoplasmic. A helical membrane pass occupies residues 252 to 272 (FFCFFVISSCAAFISVPLLIL). The Extracellular segment spans residues 273 to 276 (WRDK). Residues 277–297 (IGVMVCVGIMAACPSGHAAVL) form a helical membrane-spanning segment. Topologically, residues 298–333 (ISGNAKLRRAVTTILLWAQSSLKVRADHKADSRTLC) are cytoplasmic.

It belongs to the G-protein coupled receptor T2R family.

The protein resides in the membrane. Functionally, receptor that may play a role in the perception of bitterness and is gustducin-linked. May play a role in sensing the chemical composition of the gastrointestinal content. The activity of this receptor may stimulate alpha gustducin, mediate PLC-beta-2 activation and lead to the gating of TRPM5. The protein is Taste receptor type 2 member 38 (TAS2R38) of Pan paniscus (Pygmy chimpanzee).